A 213-amino-acid polypeptide reads, in one-letter code: MKIIMLGAPGAGKGTQAKKIAAKYAIPHISTGDIFRANIKNNTELGQKAKTYMDKGELVPDELVVDLIMDRFKEADCANGYVLDGFPRTIPQAEALDKALSANGESVDYAINVEVPDENIINRMSGRRACVGCGATYHIQFNPTKVEGICDACGEKLILRDDDKPETVKNRLSVYHEQTQPLIEYYSGKGVLKEVDGTQPMDDVFAAIVKILG.

Position 10–15 (Gly10–Thr15) interacts with ATP. An NMP region spans residues Ser30–Val59. AMP is bound by residues Thr31, Arg36, Glu57–Val59, Gly85–Arg88, and Gln92. The LID stretch occupies residues Gly126–Asp163. Arg127 lines the ATP pocket. Positions 130 and 133 each coordinate Zn(2+). Thr136–Tyr137 provides a ligand contact to ATP. Positions 150 and 153 each coordinate Zn(2+). 2 residues coordinate AMP: Arg160 and Arg171. Position 199 (Gln199) interacts with ATP.

It belongs to the adenylate kinase family. As to quaternary structure, monomer.

It localises to the cytoplasm. It catalyses the reaction AMP + ATP = 2 ADP. It participates in purine metabolism; AMP biosynthesis via salvage pathway; AMP from ADP: step 1/1. In terms of biological role, catalyzes the reversible transfer of the terminal phosphate group between ATP and AMP. Plays an important role in cellular energy homeostasis and in adenine nucleotide metabolism. This chain is Adenylate kinase, found in Lachnospira eligens (strain ATCC 27750 / DSM 3376 / VPI C15-48 / C15-B4) (Eubacterium eligens).